Consider the following 741-residue polypeptide: Zinc transporter ZIP6 (741 aa).

Positions 1-20 (MATNLSVIMILTFALWVTNP) are cleaved as a signal peptide. The Extracellular portion of the chain corresponds to 21–311 (LHELQSTAAF…PKTYSLQIAW (291 aa)). N68 is a glycosylation site (N-linked (GlcNAc...) asparagine). Basic and acidic residues predominate over residues 95-111 (HDHERHSDHERHSDHER). Disordered stretches follow at residues 95–172 (HDHE…EVTS) and 189–213 (ETPK…EKSR). Residues 135–147 (DNSGKNPNTSQGK) show a composition bias toward polar residues. An N-linked (GlcNAc...) asparagine glycan is attached at N142. The segment covering 150–162 (RPAEHVNGRRNGK) has biased composition (basic and acidic residues). The span at 163 to 172 (ESASSSEVTS) shows a compositional bias: low complexity. Residues 200 to 209 (INPSTPPSIT) are compositionally biased toward polar residues. 3 N-linked (GlcNAc...) asparagine glycosylation sites follow: N226, N251, and N268. Residues 312–332 (LGGFIAISIISFLSLLGVILV) traverse the membrane as a helical segment. Residues 333 to 341 (PLMNRVFFK) lie on the Cytoplasmic side of the membrane. Residues 342–362 (FLLSFLVALAVGTLSGDALLH) traverse the membrane as a helical segment. Residues 363–409 (LLPHSHASHHHSHSHEEPAMEMKRGPLFSHLSAQNLEESSYFDSTWK) lie on the Extracellular side of the membrane. The chain crosses the membrane as a helical span at residues 410 to 430 (GLTALGGLYFMFLVEHVLTLI). The Cytoplasmic segment spans residues 431–643 (KQFKDKKKKN…LKAGMTVKQA (213 aa)). Residues 434–494 (KDKKKKNQKK…QEPSPFDSQQ (61 aa)) are disordered. The stretch at 450-475 (VESKKQLSKYESQLSTNEEKVDTGER) forms a coiled coil. Phosphoserine occurs at positions 457 and 464. The span at 466-477 (NEEKVDTGERPE) shows a compositional bias: basic and acidic residues. A compositionally biased stretch (polar residues) spans 481–494 (QADSQEPSPFDSQQ). Residues 644–664 (VLYNALSAMLAYLGMATGIFI) form a helical membrane-spanning segment. Topologically, residues 665-672 (GHYAENVS) are extracellular. A glycan (N-linked (GlcNAc...) asparagine) is linked at N670. The helical transmembrane segment at 673 to 693 (MWIFALTAGLFMYVALVDMVP) threads the bilayer. The Cytoplasmic portion of the chain corresponds to 694–710 (EMLHNDASDHGCSRWGY). A helical membrane pass occupies residues 711–731 (FFLQNAGILLGFGIMLLISIF). At 732 to 741 (EHKIVFRINF) the chain is on the extracellular side.

Belongs to the ZIP transporter (TC 2.A.5) family. As to quaternary structure, interacts with SLC39A10; which triggers cells to undergo EMT and mitosis. Found in a complex with SLC39A6, SLC39A10 and with the 'Ser-727' phosphorylated form of STAT3 throughout mitosis. Found in a complex with SLC39A6, SLC39A10 and with NCAM1; this complex controls NCAM1 phosphorylation and integration into focal adhesion complexes during epithelial-to-mesenchymal transition (EMT). Found in a complex with SLC39A6, SLC39A10 and with GSK3B that controls NCAM1 phosphorylation. In terms of processing, cleaved on the N-terminus before locating to the plasma membrane. Post-translationally, N-glycosylated. Phosphorylated by ZAP70 in response to TCR stimulation leading to its activation. In terms of tissue distribution, expressed in the endothelial cells of the brain capillaries.

The protein localises to the cell membrane. The protein resides in the cell projection. Its subcellular location is the lamellipodium membrane. It localises to the membrane raft. It is found in the apical cell membrane. The enzyme catalyses Zn(2+)(in) = Zn(2+)(out). Its function is as follows. Zinc-influx transporter which plays a role in zinc homeostasis and in the induction of epithelial-to-mesenchymal transition (EMT). When associated with SLC39A10, the heterodimer formed by SLC39A10 and SLC39A6 mediates cellular zinc uptake to trigger cells to undergo epithelial- to-mesenchymal transition (EMT). The SLC39A10-SLC39A6 heterodimer also controls NCAM1 phosphorylation and its integration into focal adhesion complexes during EMT. Zinc influx inactivates GSK3B, enabling unphosphorylated SNAI1 in the nucleus to down-regulate adherence genes such as CDH1, causing loss of cell adherence. In addition, the SLC39A10-SLC39A6 heterodimer plays an essentiel role in initiating mitosis by importing zinc into cells to initiate a pathway resulting in the onset of mitosis. Participates in the T-cell receptor signaling regulation by mediating cellular zinc uptake into activated lymphocytes. Regulates the zinc influx necessary for proper meiotic progression to metaphase II (MII) that allows the oocyte-to-egg transition. The protein is Zinc transporter ZIP6 of Rattus norvegicus (Rat).